Consider the following 265-residue polypeptide: Protein IL-40 (265 aa).

Positions 1 to 20 (MGLPGLFCLAVLAASSFSKA) are cleaved as a signal peptide. Asn86 and Asn132 each carry an N-linked (GlcNAc...) asparagine glycan.

Expressed in fetal liver and bone marrow. Expressed in peripheral blood lymphocyte B cells.

The protein localises to the secreted. Its function is as follows. Probable B cell-associated cytokine that plays a role in the regulation of humoral immune responses. Involved in lymphocyte B cell development and immunoglobulin/IgA production. In Homo sapiens (Human), this protein is Protein IL-40.